Consider the following 338-residue polypeptide: Ketol-acid reductoisomerase (NADP(+)) (338 aa).

The KARI N-terminal Rossmann domain occupies 1 to 181; that stretch reads MKVSYDKDCD…GGGRTGIIET (181 aa). NADP(+)-binding positions include 24–27, R47, S50, S52, and 82–85; these read YGSQ and DEFQ. H107 is an active-site residue. G133 is an NADP(+) binding site. Residues 182-327 enclose the KARI C-terminal knotted domain; the sequence is TFKDETETDL…EKLRAMMPWI (146 aa). D190, E194, E226, and E230 together coordinate Mg(2+). S251 serves as a coordination point for substrate.

This sequence belongs to the ketol-acid reductoisomerase family. Mg(2+) serves as cofactor.

The catalysed reaction is (2R)-2,3-dihydroxy-3-methylbutanoate + NADP(+) = (2S)-2-acetolactate + NADPH + H(+). It carries out the reaction (2R,3R)-2,3-dihydroxy-3-methylpentanoate + NADP(+) = (S)-2-ethyl-2-hydroxy-3-oxobutanoate + NADPH + H(+). It functions in the pathway amino-acid biosynthesis; L-isoleucine biosynthesis; L-isoleucine from 2-oxobutanoate: step 2/4. It participates in amino-acid biosynthesis; L-valine biosynthesis; L-valine from pyruvate: step 2/4. Involved in the biosynthesis of branched-chain amino acids (BCAA). Catalyzes an alkyl-migration followed by a ketol-acid reduction of (S)-2-acetolactate (S2AL) to yield (R)-2,3-dihydroxy-isovalerate. In the isomerase reaction, S2AL is rearranged via a Mg-dependent methyl migration to produce 3-hydroxy-3-methyl-2-ketobutyrate (HMKB). In the reductase reaction, this 2-ketoacid undergoes a metal-dependent reduction by NADPH to yield (R)-2,3-dihydroxy-isovalerate. The polypeptide is Ketol-acid reductoisomerase (NADP(+)) (Stutzerimonas stutzeri (strain A1501) (Pseudomonas stutzeri)).